Consider the following 293-residue polypeptide: Probable 2-(5''-triphosphoribosyl)-3'-dephosphocoenzyme-A synthase (293 aa).

This sequence belongs to the CitG/MdcB family.

The catalysed reaction is 3'-dephospho-CoA + ATP = 2'-(5''-triphospho-alpha-D-ribosyl)-3'-dephospho-CoA + adenine. In terms of biological role, involved in the formation of 2-(5''-phosphoribosyl)-3'-dephosphocoenzyme-A, the prosthetic group of the acyl-carrier protein of the malonate decarboxylase. This Pseudomonas aeruginosa (strain UCBPP-PA14) protein is Probable 2-(5''-triphosphoribosyl)-3'-dephosphocoenzyme-A synthase.